A 391-amino-acid polypeptide reads, in one-letter code: Anhydro-N-acetylmuramic acid kinase (391 aa).

ATP is bound at residue glycine 9–aspartate 16.

Belongs to the anhydro-N-acetylmuramic acid kinase family.

The enzyme catalyses 1,6-anhydro-N-acetyl-beta-muramate + ATP + H2O = N-acetyl-D-muramate 6-phosphate + ADP + H(+). It participates in amino-sugar metabolism; 1,6-anhydro-N-acetylmuramate degradation. Its pathway is cell wall biogenesis; peptidoglycan recycling. Functionally, catalyzes the specific phosphorylation of 1,6-anhydro-N-acetylmuramic acid (anhMurNAc) with the simultaneous cleavage of the 1,6-anhydro ring, generating MurNAc-6-P. Is required for the utilization of anhMurNAc either imported from the medium or derived from its own cell wall murein, and thus plays a role in cell wall recycling. The protein is Anhydro-N-acetylmuramic acid kinase of Gloeothece citriformis (strain PCC 7424) (Cyanothece sp. (strain PCC 7424)).